Here is a 312-residue protein sequence, read N- to C-terminus: Carbamate kinase 2 (312 aa).

It belongs to the carbamate kinase family.

It is found in the cytoplasm. It carries out the reaction hydrogencarbonate + NH4(+) + ATP = carbamoyl phosphate + ADP + H2O + H(+). It functions in the pathway metabolic intermediate metabolism; carbamoyl phosphate degradation; CO(2) and NH(3) from carbamoyl phosphate: step 1/1. This chain is Carbamate kinase 2 (arcC2), found in Enterococcus faecalis (strain ATCC 700802 / V583).